The following is a 381-amino-acid chain: Anhydro-N-acetylmuramic acid kinase (381 aa).

Glycine 13–aspartate 20 is an ATP binding site.

The protein belongs to the anhydro-N-acetylmuramic acid kinase family.

It carries out the reaction 1,6-anhydro-N-acetyl-beta-muramate + ATP + H2O = N-acetyl-D-muramate 6-phosphate + ADP + H(+). Its pathway is amino-sugar metabolism; 1,6-anhydro-N-acetylmuramate degradation. It participates in cell wall biogenesis; peptidoglycan recycling. Catalyzes the specific phosphorylation of 1,6-anhydro-N-acetylmuramic acid (anhMurNAc) with the simultaneous cleavage of the 1,6-anhydro ring, generating MurNAc-6-P. Is required for the utilization of anhMurNAc either imported from the medium or derived from its own cell wall murein, and thus plays a role in cell wall recycling. The polypeptide is Anhydro-N-acetylmuramic acid kinase (Francisella tularensis subsp. novicida (strain U112)).